The sequence spans 458 residues: F-box/WD repeat-containing protein 9 (458 aa).

Methionine 1 carries the N-acetylmethionine modification. 2 disordered regions span residues 1 to 30 and 42 to 64; these read MELP…DAQA and KSGL…SASE. The span at 16-26 shows a compositional bias: acidic residues; the sequence is DDSDPESETDP. Position 18 is a phosphoserine (serine 18). Threonine 55 carries the phosphothreonine modification. Phosphoserine is present on serine 59. Residues 76–123 form the F-box domain; the sequence is EPGLLSLPPELLLEICSYLDARLVLHVLSRVCHALRDLVSDHVTWRLR. WD repeat units follow at residues 171–210, 220–261, 264–301, 305–342, 344–381, 387–424, and 427–458; these read GHVA…TESN, KRNS…QQFG, KASS…ALLK, LHSR…VLQR, QLDS…FQLI, GHSF…RTIC, and RHDN…RLQA.

As to quaternary structure, interacts with SKP1 and CUL1.

In terms of biological role, substrate-recognition component of the SCF (SKP1-CUL1-F-box protein)-type E3 ubiquitin ligase complex. This Homo sapiens (Human) protein is F-box/WD repeat-containing protein 9 (FBXW9).